We begin with the raw amino-acid sequence, 397 residues long: Mediator of RNA polymerase II transcription subunit 3 (397 aa).

M1 carries the N-acetylmethionine modification. Residues 147–165 (ASTPTTTATPHANPITHAH) are compositionally biased toward low complexity. Disordered regions lie at residues 147–227 (ASTP…AQAQ), 288–327 (SMGAQNQGGQVSMSQFNGSGNGSNPNTNTNSNNTPLQSQL), and 346–370 (FQQQQQQQQQQQQPQPQYNMNMGMN). Polar residues-rich tracts occupy residues 166–178 (SLSNPNSTATMQH) and 189–202 (SGSTMGTPTVHNST). The span at 211–223 (KKPRKPRQTKKAK) shows a compositional bias: basic residues. Polar residues predominate over residues 290-303 (GAQNQGGQVSMSQF). Residues 309 to 322 (GSNPNTNTNSNNTP) show a composition bias toward low complexity.

This sequence belongs to the mediator complex subunit 3 family. Component of the Mediator complex, which is composed of at least 21 subunits that form three structurally distinct submodules. The Mediator head module contains MED6, MED8, MED11, SRB4/MED17, SRB5/MED18, ROX3/MED19, SRB2/MED20 and SRB6/MED22, the middle module contains MED1, MED4, NUT1/MED5, MED7, CSE2/MED9, NUT2/MED10, SRB7/MED21 and SOH1/MED31, and the tail module contains MED2, PGD1/MED3, RGR1/MED14, GAL11/MED15 and SIN4/MED16. The head and the middle modules interact directly with RNA polymerase II, whereas the elongated tail module interacts with gene-specific regulatory proteins. PGD1/MED3 interacts directly with the CYC8-TUP1 corepressor proteins.

It localises to the nucleus. Component of the Mediator complex, a coactivator involved in the regulated transcription of nearly all RNA polymerase II-dependent genes. Mediator functions as a bridge to convey information from gene-specific regulatory proteins to the basal RNA polymerase II transcription machinery. The Mediator complex, having a compact conformation in its free form, is recruited to promoters by direct interactions with regulatory proteins and serves for the assembly of a functional preinitiation complex with RNA polymerase II and the general transcription factors. The Mediator complex unfolds to an extended conformation and partially surrounds RNA polymerase II, specifically interacting with the unphosphorylated form of the C-terminal domain (CTD) of RNA polymerase II. The Mediator complex dissociates from the RNA polymerase II holoenzyme and stays at the promoter when transcriptional elongation begins. PGD1/MED3 is also involved in direct repeat recombination. This Saccharomyces cerevisiae (strain ATCC 204508 / S288c) (Baker's yeast) protein is Mediator of RNA polymerase II transcription subunit 3 (PGD1).